The following is a 178-amino-acid chain: ATP synthase subunit delta (178 aa).

This sequence belongs to the ATPase delta chain family. In terms of assembly, F-type ATPases have 2 components, F(1) - the catalytic core - and F(0) - the membrane proton channel. F(1) has five subunits: alpha(3), beta(3), gamma(1), delta(1), epsilon(1). F(0) has three main subunits: a(1), b(2) and c(10-14). The alpha and beta chains form an alternating ring which encloses part of the gamma chain. F(1) is attached to F(0) by a central stalk formed by the gamma and epsilon chains, while a peripheral stalk is formed by the delta and b chains.

The protein localises to the cell membrane. In terms of biological role, f(1)F(0) ATP synthase produces ATP from ADP in the presence of a proton or sodium gradient. F-type ATPases consist of two structural domains, F(1) containing the extramembraneous catalytic core and F(0) containing the membrane proton channel, linked together by a central stalk and a peripheral stalk. During catalysis, ATP synthesis in the catalytic domain of F(1) is coupled via a rotary mechanism of the central stalk subunits to proton translocation. Functionally, this protein is part of the stalk that links CF(0) to CF(1). It either transmits conformational changes from CF(0) to CF(1) or is implicated in proton conduction. The polypeptide is ATP synthase subunit delta (Mycoplasma pneumoniae (strain ATCC 29342 / M129 / Subtype 1) (Mycoplasmoides pneumoniae)).